The sequence spans 188 residues: Ribosome maturation factor RimM (188 aa).

One can recognise a PRC barrel domain in the interval 103–177 (EEGWYYADLI…RVVIDPPAGT (75 aa)).

It belongs to the RimM family. In terms of assembly, binds ribosomal protein uS19.

Its subcellular location is the cytoplasm. In terms of biological role, an accessory protein needed during the final step in the assembly of 30S ribosomal subunit, possibly for assembly of the head region. Essential for efficient processing of 16S rRNA. May be needed both before and after RbfA during the maturation of 16S rRNA. It has affinity for free ribosomal 30S subunits but not for 70S ribosomes. In Parvibaculum lavamentivorans (strain DS-1 / DSM 13023 / NCIMB 13966), this protein is Ribosome maturation factor RimM.